A 572-amino-acid polypeptide reads, in one-letter code: 2-isopropylmalate synthase (572 aa).

Residues 39–313 (PVWMSTDLRD…HPGLDFSRIN (275 aa)) form the Pyruvate carboxyltransferase domain. Mg(2+) contacts are provided by D48, H252, H254, and N288. A regulatory domain region spans residues 445–572 (VAAPYAYVEH…GVGRQVAATR (128 aa)).

It belongs to the alpha-IPM synthase/homocitrate synthase family. LeuA type 2 subfamily. As to quaternary structure, homodimer. The cofactor is Mg(2+).

It is found in the cytoplasm. It carries out the reaction 3-methyl-2-oxobutanoate + acetyl-CoA + H2O = (2S)-2-isopropylmalate + CoA + H(+). The protein operates within amino-acid biosynthesis; L-leucine biosynthesis; L-leucine from 3-methyl-2-oxobutanoate: step 1/4. In terms of biological role, catalyzes the condensation of the acetyl group of acetyl-CoA with 3-methyl-2-oxobutanoate (2-ketoisovalerate) to form 3-carboxy-3-hydroxy-4-methylpentanoate (2-isopropylmalate). The sequence is that of 2-isopropylmalate synthase from Azoarcus sp. (strain BH72).